Reading from the N-terminus, the 185-residue chain is Ribosome-recycling factor (185 aa).

The protein belongs to the RRF family.

It is found in the cytoplasm. In terms of biological role, responsible for the release of ribosomes from messenger RNA at the termination of protein biosynthesis. May increase the efficiency of translation by recycling ribosomes from one round of translation to another. This Laribacter hongkongensis (strain HLHK9) protein is Ribosome-recycling factor.